The chain runs to 104 residues: Probable quinol monooxygenase YgiN (104 aa).

In terms of domain architecture, ABM spans 2-100 (LTVIAEIRTR…DVLEMNIRIL (99 aa)).

Homodimer.

The catalysed reaction is menadiol + 2 O2 = menadione + 2 superoxide + 2 H(+). Functionally, can oxidize menadiol to menadione. The sequence is that of Probable quinol monooxygenase YgiN (ygiN) from Escherichia coli O157:H7.